The primary structure comprises 60 residues: Cytotoxin 5 (60 aa).

4 cysteine pairs are disulfide-bonded: C3–C21, C14–C38, C42–C53, and C54–C59.

It belongs to the three-finger toxin family. Short-chain subfamily. Type IA cytotoxin sub-subfamily. Monomer in solution; Homodimer and oligomer in the presence of negatively charged lipids forming a pore with a size ranging between 20 and 30 Angstroms. In terms of tissue distribution, expressed by the venom gland.

The protein resides in the secreted. It localises to the target cell membrane. In terms of biological role, basic protein that binds to cell membrane and depolarizes cardiomyocytes. It also possesses lytic activity on many other cells, including red blood cells. Interaction with sulfatides in the cell membrane induces pore formation and cell internalization and is responsible for cytotoxicity in cardiomyocytes. It targets the mitochondrial membrane and induces mitochondrial swelling and fragmentation. Inhibits protein kinases C. It binds to the integrin alpha-V/beta-3 with a moderate affinity. Is cardiotoxic and cytocidal to Yoshida sarcoma cells. This chain is Cytotoxin 5, found in Naja atra (Chinese cobra).